The primary structure comprises 437 residues: Trigger factor (437 aa).

The PPIase FKBP-type domain occupies 161–246 (DDQVNIDFVG…VNSVSAPVLP (86 aa)).

Belongs to the FKBP-type PPIase family. Tig subfamily.

The protein localises to the cytoplasm. It carries out the reaction [protein]-peptidylproline (omega=180) = [protein]-peptidylproline (omega=0). Involved in protein export. Acts as a chaperone by maintaining the newly synthesized protein in an open conformation. Functions as a peptidyl-prolyl cis-trans isomerase. The sequence is that of Trigger factor from Pseudomonas putida (strain GB-1).